A 290-amino-acid chain; its full sequence is Proteasome subunit beta (290 aa).

A propeptide spans 1 to 58 (removed in mature form; by autocatalysis); sequence MTTSGGLTGPGAFGRLPQPFHQPGITSFVEFLALQAPDLLPGRLQMPAGGQPPEVPHG. The active-site Nucleophile is the threonine 59.

Belongs to the peptidase T1B family. The 20S proteasome core is composed of 14 alpha and 14 beta subunits that assemble into four stacked heptameric rings, resulting in a barrel-shaped structure. The two inner rings, each composed of seven catalytic beta subunits, are sandwiched by two outer rings, each composed of seven alpha subunits. The catalytic chamber with the active sites is on the inside of the barrel. Has a gated structure, the ends of the cylinder being occluded by the N-termini of the alpha-subunits. Is capped by the proteasome-associated ATPase, ARC.

It localises to the cytoplasm. The enzyme catalyses Cleavage of peptide bonds with very broad specificity.. It functions in the pathway protein degradation; proteasomal Pup-dependent pathway. Its activity is regulated as follows. The formation of the proteasomal ATPase ARC-20S proteasome complex, likely via the docking of the C-termini of ARC into the intersubunit pockets in the alpha-rings, may trigger opening of the gate for substrate entry. Interconversion between the open-gate and close-gate conformations leads to a dynamic regulation of the 20S proteasome proteolysis activity. Functionally, component of the proteasome core, a large protease complex with broad specificity involved in protein degradation. This Acidothermus cellulolyticus (strain ATCC 43068 / DSM 8971 / 11B) protein is Proteasome subunit beta.